The primary structure comprises 185 residues: Protein TIFY 5 (185 aa).

In terms of domain architecture, Tify spans alanine 38–glutamine 72. Positions lysine 77–arginine 185 are disordered. Low complexity predominate over residues proline 137–alanine 157. The Jas motif lies at proline 155 to tyrosine 182. The Nuclear localization signal motif lies at methionine 162–phenylalanine 169.

The protein belongs to the TIFY/JAZ family. In terms of processing, ubiquitinated. Targeted for degradation by the SCF(COI1) E3 ubiquitin ligase-proteasome pathway during jasmonate signaling.

It is found in the nucleus. In terms of biological role, repressor of jasmonate responses. The polypeptide is Protein TIFY 5 (Oryza sativa subsp. indica (Rice)).